The following is a 287-amino-acid chain: Undecaprenyl-diphosphatase (287 aa).

Helical transmembrane passes span 50 to 70 (PGVS…IAYF), 99 to 119 (IAMA…KLFW), 128 to 148 (LRSV…LAVA), 206 to 226 (FLLG…DALA), 231 to 251 (AGPL…WLAI), and 263 to 283 (TWLF…WWSI).

It belongs to the UppP family.

It is found in the cell inner membrane. It carries out the reaction di-trans,octa-cis-undecaprenyl diphosphate + H2O = di-trans,octa-cis-undecaprenyl phosphate + phosphate + H(+). Catalyzes the dephosphorylation of undecaprenyl diphosphate (UPP). Confers resistance to bacitracin. In Parasynechococcus marenigrum (strain WH8102), this protein is Undecaprenyl-diphosphatase.